Reading from the N-terminus, the 174-residue chain is MKKLEEYVRSIPDFPEEGIIFRDVTSVLQDKDSLKMSIDQMQENLNGLDFDVIVGPESRGFIFGVPIAYNLNKAFIPVRKKGKLPCETVEMEYALEYGTATIEMHKDSIKPGQKVVIIDDLIATGGTIEAITKLIEQLGGEVVKIVFLMELEGLMGREKLKGYDIASVIKYAGK.

Belongs to the purine/pyrimidine phosphoribosyltransferase family. In terms of assembly, homodimer.

Its subcellular location is the cytoplasm. It catalyses the reaction AMP + diphosphate = 5-phospho-alpha-D-ribose 1-diphosphate + adenine. The protein operates within purine metabolism; AMP biosynthesis via salvage pathway; AMP from adenine: step 1/1. In terms of biological role, catalyzes a salvage reaction resulting in the formation of AMP, that is energically less costly than de novo synthesis. This chain is Adenine phosphoribosyltransferase, found in Lachnoclostridium phytofermentans (strain ATCC 700394 / DSM 18823 / ISDg) (Clostridium phytofermentans).